The primary structure comprises 284 residues: NAD kinase (284 aa).

Asp-67 functions as the Proton acceptor in the catalytic mechanism. NAD(+) is bound by residues 67–68, 141–142, Arg-152, Lys-169, Asp-171, 182–187, and Gln-241; these read DG, ND, and TGYSLS.

The protein belongs to the NAD kinase family. A divalent metal cation is required as a cofactor.

The protein localises to the cytoplasm. It catalyses the reaction NAD(+) + ATP = ADP + NADP(+) + H(+). In terms of biological role, involved in the regulation of the intracellular balance of NAD and NADP, and is a key enzyme in the biosynthesis of NADP. Catalyzes specifically the phosphorylation on 2'-hydroxyl of the adenosine moiety of NAD to yield NADP. The chain is NAD kinase from Geobacter sulfurreducens (strain ATCC 51573 / DSM 12127 / PCA).